The chain runs to 277 residues: Large ribosomal subunit protein uL2c (277 aa).

The disordered stretch occupies residues 224-257; that stretch reads VMNPIDHPHGGGEGRAPIGRKKPLTPWGHPALGR.

The protein belongs to the universal ribosomal protein uL2 family. In terms of assembly, part of the 50S ribosomal subunit.

It is found in the plastid. The protein resides in the chloroplast. This Anthoceros angustus (Hornwort) protein is Large ribosomal subunit protein uL2c (rpl2).